Reading from the N-terminus, the 866-residue chain is Fibrinogen alpha chain (866 aa).

An N-terminal signal peptide occupies residues 1–19; that stretch reads MFSMRIVCLVLSVVGTAWT. Ser22 is subject to Phosphoserine. Residues 36–38 are alpha-chain polymerization, binding distal domain of another fibrin gamma chain; the sequence is GPR. A Phosphoserine; by FAM20C modification is found at Ser45. Position 50 is a phosphoserine (Ser50). Ser56 bears the Phosphoserine; by FAM20C mark. A coiled-coil region spans residues 68–631; it reads CRMKGLIDEV…GHAKSRPVRD (564 aa). A disordered region spans residues 262-460; sequence ERPGGNEITR…SGSTTTTRRS (199 aa). Residues 270-299 show a composition bias toward low complexity; sequence TRGGSTSYGTGSETESPRNPSSAGSWNSGS. 3 positions are modified to phosphoserine: Ser281, Ser291, and Ser294. Thr320 carries an O-linked (GalNAc...) threonine glycan. Lys322 is covalently cross-linked (Isoglutamyl lysine isopeptide (Lys-Gln) (interchain with Q-41 in alpha-2-antiplasmin)). Gln347 is covalently cross-linked (Isoglutamyl lysine isopeptide (Gln-Lys) (interchain with K-?)). Residue Ser351 is glycosylated (O-linked (GalNAc...) serine). Positions 354-391 are enriched in polar residues; that stretch reads PGSTGTWNPGSSERGSAGHWTSESSVSGSTGQWHSESG. Ser364 carries the post-translational modification Phosphoserine; by FAM20C. An Isoglutamyl lysine isopeptide (Gln-Lys) (interchain with K-?) cross-link involves residue Gln385. At Thr412 the chain carries Phosphothreonine. The segment covering 424–449 has biased composition (basic and acidic residues); that stretch reads TRREYHTEKLVTSKGDKELRTGKEKV. Over residues 450–460 the composition is skewed to low complexity; that stretch reads TSGSTTTTRRS. Ser451 carries the post-translational modification Phosphoserine. The N-linked (GlcNAc...) asparagine; in variant Caracas-2 glycan is linked to Ser453. Cys461 and Cys491 form a disulfide bridge. At Ser501 the chain carries Phosphoserine. Thr505 carries the phosphothreonine modification. The residue at position 524 (Ser524) is a Phosphoserine; by FAM20C. Isoglutamyl lysine isopeptide (Lys-Gln) (interchain with Q-?) cross-links involve residues Lys527 and Lys558. Residues 543–638 are disordered; sequence ETESRGSESG…VRDCDDVLQT (96 aa). Ser560 is modified (phosphoserine; by FAM20C). A 4-hydroxyproline; by P4HA1 modification is found at Pro565. Residues Lys575, Lys581, and Lys599 each participate in an isoglutamyl lysine isopeptide (Lys-Gln) (interchain with Q-?) cross-link. Over residues 575 to 589 the composition is skewed to low complexity; that stretch reads KSSSYSKQFTSSTSY. Residues 594 to 617 show a composition bias toward basic and acidic residues; it reads STFESKSYKMADEAGSEADHEGTH. Ser609 is subject to Phosphoserine; by FAM20C. The segment covering 618–627 has biased composition (basic residues); sequence STKRGHAKSR. Residues 623–864 enclose the Fibrinogen C-terminal domain; sequence HAKSRPVRDC…AVRMKIRPLV (242 aa). The N-linked (GlcNAc...) asparagine glycan is linked to Asn686. 4 residues coordinate Ca(2+): Asp791, Asp793, Trp795, and Glu797. Cys799 and Cys812 are oxidised to a cystine.

In terms of assembly, heterohexamer; disulfide linked. Contains 2 sets of 3 non-identical chains (alpha, beta and gamma). The 2 heterotrimers are in head to head conformation with the N-termini in a small central domain. (Microbial infection) Interacts with Staphylococcus aureus protein Fib; this interaction inhibits fibrinogen-dependent platelet aggregation and protects the bacteria form phagocytosis. In terms of processing, the alpha chain is normally not N-glycosylated, even though glycosylation at Asn-686 was observed when a fragment of the protein was expressed in insect cells. It is well known that heterologous expression of isolated domains can lead to adventitious protein modifications. Besides, glycosylation at Asn-686 is supported by large-scale glycoproteomics studies, but the evidence is still quite tenuous. Most likely, Asn-686 is not glycosylated in the healthy human body, or only with low efficiency. Post-translationally, O-glycosylated. Forms F13A-mediated cross-links between a glutamine and the epsilon-amino group of a lysine residue, forming fibronectin-fibrinogen heteropolymers. In terms of processing, about one-third of the alpha chains in the molecules in blood were found to be phosphorylated. Post-translationally, conversion of fibrinogen to fibrin is triggered by thrombin, which cleaves fibrinopeptides A and B from alpha and beta chains, and thus exposes the N-terminal polymerization sites responsible for the formation of the soft clot. The soft clot is converted into the hard clot by factor XIIIA which catalyzes the epsilon-(gamma-glutamyl)lysine cross-linking between gamma chains (stronger) and between alpha chains (weaker) of different monomers. Phosphorylated by FAM20C in the extracellular medium. Detected in blood plasma (at protein level).

Its subcellular location is the secreted. Its function is as follows. Cleaved by the protease thrombin to yield monomers which, together with fibrinogen beta (FGB) and fibrinogen gamma (FGG), polymerize to form an insoluble fibrin matrix. Fibrin has a major function in hemostasis as one of the primary components of blood clots. In addition, functions during the early stages of wound repair to stabilize the lesion and guide cell migration during re-epithelialization. Was originally thought to be essential for platelet aggregation, based on in vitro studies using anticoagulated blood. However, subsequent studies have shown that it is not absolutely required for thrombus formation in vivo. Enhances expression of SELP in activated platelets via an ITGB3-dependent pathway. Maternal fibrinogen is essential for successful pregnancy. Fibrin deposition is also associated with infection, where it protects against IFNG-mediated hemorrhage. May also facilitate the immune response via both innate and T-cell mediated pathways. The protein is Fibrinogen alpha chain (FGA) of Homo sapiens (Human).